The following is a 173-amino-acid chain: Translation initiation factor IF-3 (173 aa).

The protein belongs to the IF-3 family. Monomer.

Its subcellular location is the cytoplasm. In terms of biological role, IF-3 binds to the 30S ribosomal subunit and shifts the equilibrium between 70S ribosomes and their 50S and 30S subunits in favor of the free subunits, thus enhancing the availability of 30S subunits on which protein synthesis initiation begins. In Ehrlichia chaffeensis (strain ATCC CRL-10679 / Arkansas), this protein is Translation initiation factor IF-3.